The chain runs to 312 residues: Mas-related G-protein coupled receptor member E (312 aa).

Over 1-20 (MMEPREAGQHVGAANGAQED) the chain is Extracellular. Residues 21-41 (VAFNLIILSLTEGLGLGGLLG) traverse the membrane as a helical segment. Topologically, residues 42-59 (NGAVLWLLSSNVYRNPFA) are cytoplasmic. Residues 60–80 (IYLLDVACADLIFLGCHMVAI) traverse the membrane as a helical segment. Topologically, residues 81 to 106 (VPDLLQGRLDFPGFVQTSLATLRFFC) are extracellular. The chain crosses the membrane as a helical span at residues 107 to 127 (YIVGLSLLAAVSVEQCLAALF). The Cytoplasmic portion of the chain corresponds to 128-141 (PAWYSCRRPRHLTT). The chain crosses the membrane as a helical span at residues 142 to 162 (CVCALTWALCLLLHLLLSGAC). Residues 163 to 176 (TQFFGEPSRHLCRT) lie on the Extracellular side of the membrane. Residues 177–197 (LWLVAAVLLALLCCTMCGASL) traverse the membrane as a helical segment. Residues 198–217 (MLLLRVERGPQRPPPRGFPG) lie on the Cytoplasmic side of the membrane. A helical membrane pass occupies residues 218–238 (LILLTVLLFLFCGLPFGIYWL). Topologically, residues 239–241 (SRN) are extracellular. A helical membrane pass occupies residues 242–262 (LLWYIPHYFYHFSFLMAAVHC). Over 263–312 (AAKPVVYFCLGSAQGRRLPLRLVLQRALGDEAELGAVRETSRRGLVDIAA) the chain is Cytoplasmic.

This sequence belongs to the G-protein coupled receptor 1 family. Mas subfamily.

The protein resides in the cell membrane. Its function is as follows. Orphan receptor. May regulate nociceptor function and/or development, including the sensation or modulation of pain. This is Mas-related G-protein coupled receptor member E (MRGPRE) from Homo sapiens (Human).